The chain runs to 93 residues: UPF0728 protein C10orf53 homolog (93 aa).

It belongs to the UPF0728 family.

This is UPF0728 protein C10orf53 homolog from Xenopus tropicalis (Western clawed frog).